Consider the following 389-residue polypeptide: Succinate--CoA ligase [ADP-forming] subunit beta (389 aa).

Residues 9–236 form the ATP-grasp domain; it reads KELFAKHNVP…KDATDPLELK (228 aa). ATP contacts are provided by residues lysine 45, 52–54, serine 94, and glutamate 99; that span reads GRG. Mg(2+) contacts are provided by asparagine 191 and aspartate 205. Substrate-binding positions include asparagine 256 and 318–320; that span reads GIT.

Belongs to the succinate/malate CoA ligase beta subunit family. As to quaternary structure, heterotetramer of two alpha and two beta subunits. Mg(2+) is required as a cofactor.

The catalysed reaction is succinate + ATP + CoA = succinyl-CoA + ADP + phosphate. It catalyses the reaction GTP + succinate + CoA = succinyl-CoA + GDP + phosphate. It functions in the pathway carbohydrate metabolism; tricarboxylic acid cycle; succinate from succinyl-CoA (ligase route): step 1/1. Its function is as follows. Succinyl-CoA synthetase functions in the citric acid cycle (TCA), coupling the hydrolysis of succinyl-CoA to the synthesis of either ATP or GTP and thus represents the only step of substrate-level phosphorylation in the TCA. The beta subunit provides nucleotide specificity of the enzyme and binds the substrate succinate, while the binding sites for coenzyme A and phosphate are found in the alpha subunit. In Mycobacteroides abscessus (strain ATCC 19977 / DSM 44196 / CCUG 20993 / CIP 104536 / JCM 13569 / NCTC 13031 / TMC 1543 / L948) (Mycobacterium abscessus), this protein is Succinate--CoA ligase [ADP-forming] subunit beta.